We begin with the raw amino-acid sequence, 1287 residues long: Pullulanase A (1287 aa).

The first 44 residues, 1-44 (MRKTPSHTEKKMVYSIRSLKNGTGSVLIGASLVLLAMATPTISS), serve as a signal peptide directing secretion. The segment at 42–139 (ISSDESTPTT…VTTETKAEEP (98 aa)) is disordered. Low complexity predominate over residues 48-61 (TPTTNEPNNRNTTT). Polar residues predominate over residues 79–90 (DISSPGNANASL). Composition is skewed to low complexity over residues 99-113 (TEPT…DPAP) and 122-133 (EPTTSTSPVTTE). Substrate contacts are provided by residues 163–165 (WTW), tryptophan 175, aspartate 221, 270–272 (WYW), tryptophan 283, lysine 325, and asparagine 330. The Ca(2+) site is built by serine 668 and tyrosine 670. Residues 674-675 (YD) and phenylalanine 750 each bind substrate. The active-site Nucleophile is the aspartate 785. Glutamate 814 serves as the catalytic Proton donor. Tryptophan 816 lines the substrate pocket. Ca(2+) is bound by residues methionine 835, threonine 838, and aspartate 839. Positions 846, 849, and 856 each coordinate substrate. Residues aspartate 889 and aspartate 893 each coordinate Ca(2+). Residues asparagine 903, lysine 976, and 996-998 (DSY) contribute to the substrate site. A Ca(2+)-binding site is contributed by aspartate 999. Residues 1147-1255 (VSQNGTSHES…TPDRQAELPN (109 aa)) form a disordered region. A compositionally biased stretch (basic and acidic residues) spans 1156 to 1203 (STAEEKPDSTPSKPEHQNEASHPAHQDPAPEARPDSTKPDAKVADAEN). Low complexity predominate over residues 1212 to 1225 (SQAEQPAQEAQASS). Positions 1228–1239 (EAVRKESVENSS) are enriched in basic and acidic residues. Residues 1253–1257 (LPNTG) carry the LPXTG sorting signal motif. At threonine 1256 the chain carries Pentaglycyl murein peptidoglycan amidated threonine. Residues 1257-1287 (GIKNENKLLFAGISLLALLGLGFLLKNKKEN) constitute a propeptide, removed by sortase.

Belongs to the glycosyl hydrolase 13 family.

It localises to the secreted. Its subcellular location is the cell wall. The protein localises to the cell surface. It catalyses the reaction Hydrolysis of (1-&gt;6)-alpha-D-glucosidic linkages in pullulan, amylopectin and glycogen, and in the alpha- and beta-limit dextrins of amylopectin and glycogen.. Its activity is regulated as follows. Inhibited by 4-O-alpha-D-glucopyranosylmoranoline (G1M). Virulence factor. Involved in the degradation of glycogen of the mammalian host cells. Hydrolyzes the alpha-1,6-branchpoints of glycogen. Hydrolyzes pullulan. Does not hydrolyze dextran. Binds to mouse lung alveolar type II cells that are rich in glycogen stores. Is an alpha-glucan-specific carbohydrate-binding protein, which binds to amylose (pure alpha-(1,4)-linked glucose), amylopectin (alpha-(1,4)-linked glucose with alpha-(1,6) branch points), pullulan (linear polymer of mixed alpha-(1,4)- and alpha-(1,6)-linked glucose) and glycogen (similar to amylopectin with more frequent alpha-(1,6) branch points) in vitro. Does not bind to dextran (a linear polymer of alpha-(1,6)-linked glucose). The sequence is that of Pullulanase A from Streptococcus pneumoniae.